We begin with the raw amino-acid sequence, 440 residues long: Chromosome partition protein MukF (440 aa).

The segment at 208–236 (LSETSGTLRELQDTLEAAGDKLQANLLRI) is leucine-zipper.

It belongs to the MukF family. As to quaternary structure, interacts, and probably forms a ternary complex, with MukE and MukB via its C-terminal region. The complex formation is stimulated by calcium or magnesium. It is required for an interaction between MukE and MukB.

The protein localises to the cytoplasm. The protein resides in the nucleoid. In terms of biological role, involved in chromosome condensation, segregation and cell cycle progression. May participate in facilitating chromosome segregation by condensation DNA from both sides of a centrally located replisome during cell division. Not required for mini-F plasmid partitioning. Probably acts via its interaction with MukB and MukE. Overexpression results in anucleate cells. It has a calcium binding activity. This is Chromosome partition protein MukF from Yersinia enterocolitica serotype O:8 / biotype 1B (strain NCTC 13174 / 8081).